Here is a 540-residue protein sequence, read N- to C-terminus: Chaperonin GroEL (540 aa).

ATP contacts are provided by residues 30–33, Lys51, 87–91, Gly415, and Asp495; these read TLGP and DGTTT.

It belongs to the chaperonin (HSP60) family. Forms a cylinder of 14 subunits composed of two heptameric rings stacked back-to-back. Interacts with the co-chaperonin GroES.

It localises to the cytoplasm. The enzyme catalyses ATP + H2O + a folded polypeptide = ADP + phosphate + an unfolded polypeptide.. Functionally, together with its co-chaperonin GroES, plays an essential role in assisting protein folding. The GroEL-GroES system forms a nano-cage that allows encapsulation of the non-native substrate proteins and provides a physical environment optimized to promote and accelerate protein folding. This is Chaperonin GroEL from Serratia marcescens.